The sequence spans 384 residues: Deoxyguanosinetriphosphate triphosphohydrolase-like protein (384 aa).

The disordered stretch occupies residues 13–42; it reads LASYASDPSKTRGRRHSEPPPENRTEFQRD. The segment covering 28–42 has biased composition (basic and acidic residues); the sequence is HSEPPPENRTEFQRD. Residues 73–208 form the HD domain; it reads RLTHSLEVAQ…ANLADEVAYN (136 aa).

It belongs to the dGTPase family. Type 2 subfamily.

This chain is Deoxyguanosinetriphosphate triphosphohydrolase-like protein, found in Bordetella bronchiseptica (strain ATCC BAA-588 / NCTC 13252 / RB50) (Alcaligenes bronchisepticus).